The primary structure comprises 739 residues: Sulfate transporter (739 aa).

Basic and acidic residues-rich tracts occupy residues 1–17 (MSSE…RDLP) and 31–46 (TQRR…ETGH). Positions 1–47 (MSSENKEQHDLSPRDLPEEAFGFPSELPLETQRRSGTDLRQSETGHG) are disordered. At Ser-12 the chain carries Phosphoserine. The next 2 helical transmembrane spans lie at 112-132 (VMSG…YSLL) and 137-157 (PIYG…FGTS). Asn-205 carries N-linked (GlcNAc...) asparagine glycosylation. The next 2 membrane-spanning stretches (helical) occupy residues 227–247 (FMAG…VSVY) and 255–275 (GFVT…LLGL). N-linked (GlcNAc...) asparagine glycosylation is present at Asn-357. The next 4 helical transmembrane spans lie at 378–398 (LIPN…AITV), 420–440 (AIGF…SAAL), 455–475 (LSAI…APLF), and 524–544 (LLST…CVIL). In terms of domain architecture, STAS spans 568 to 719 (TYKNLRSKSG…YSLSEAVAFA (152 aa)).

The protein belongs to the SLC26A/SulP transporter (TC 2.A.53) family. In terms of processing, N-glycosylated. As to expression, distributed mainly in the thymus, testis and osteoblastic cells. Highly expressed in the bone, cartilage, kidney and colon.

Its subcellular location is the cell membrane. It is found in the apical cell membrane. It carries out the reaction oxalate(in) + sulfate(out) = oxalate(out) + sulfate(in). It catalyses the reaction sulfate(out) + 2 chloride(in) = sulfate(in) + 2 chloride(out). The enzyme catalyses oxalate(out) + 2 chloride(in) = oxalate(in) + 2 chloride(out). The catalysed reaction is bromide(in) + chloride(out) = bromide(out) + chloride(in). It carries out the reaction nitrate(in) + chloride(out) = nitrate(out) + chloride(in). It catalyses the reaction iodide(in) + chloride(out) = iodide(out) + chloride(in). Sulfate transporter which mediates sulfate uptake into chondrocytes in order to maintain adequate sulfation of proteoglycans which is needed for cartilage development. Mediates electroneutral anion exchange of sulfate ions for oxalate ions, sulfate and oxalate ions for chloride and/or hydroxyl ions and chloride ions for bromide, iodide and nitrate ions. The coupling of sulfate transport to both hydroxyl and chloride ions likely serves to ensure transport at both acidic pH when most sulfate uptake is mediated by sulfate-hydroxide exchange and alkaline pH when most sulfate uptake is mediated by sulfate-chloride exchange. Essential for chondrocyte proliferation, differentiation and cell size expansion. This Mus musculus (Mouse) protein is Sulfate transporter (Slc26a2).